Here is a 169-residue protein sequence, read N- to C-terminus: MAETIRIIGIDPGLRRTGWGVIDFSGNRLQFVAAGTLSSDARCDLASRLCQLYKGLSDILHQFMPHEAAVEHVFVNKDATATLKLGQARAIALLAPAQANLPVFEYAPNKVKKSVIGVGHGAKEQIHMMVKVLLPRAEFDSSDAADALALALCHSTHRTSASHYARITA.

Catalysis depends on residues Asp11, Glu71, and Asp143. Mg(2+) contacts are provided by Asp11, Glu71, and Asp143.

The protein belongs to the RuvC family. As to quaternary structure, homodimer which binds Holliday junction (HJ) DNA. The HJ becomes 2-fold symmetrical on binding to RuvC with unstacked arms; it has a different conformation from HJ DNA in complex with RuvA. In the full resolvosome a probable DNA-RuvA(4)-RuvB(12)-RuvC(2) complex forms which resolves the HJ. Mg(2+) is required as a cofactor.

The protein localises to the cytoplasm. The catalysed reaction is Endonucleolytic cleavage at a junction such as a reciprocal single-stranded crossover between two homologous DNA duplexes (Holliday junction).. In terms of biological role, the RuvA-RuvB-RuvC complex processes Holliday junction (HJ) DNA during genetic recombination and DNA repair. Endonuclease that resolves HJ intermediates. Cleaves cruciform DNA by making single-stranded nicks across the HJ at symmetrical positions within the homologous arms, yielding a 5'-phosphate and a 3'-hydroxyl group; requires a central core of homology in the junction. The consensus cleavage sequence is 5'-(A/T)TT(C/G)-3'. Cleavage occurs on the 3'-side of the TT dinucleotide at the point of strand exchange. HJ branch migration catalyzed by RuvA-RuvB allows RuvC to scan DNA until it finds its consensus sequence, where it cleaves and resolves the cruciform DNA. The chain is Crossover junction endodeoxyribonuclease RuvC from Bartonella quintana (strain Toulouse) (Rochalimaea quintana).